We begin with the raw amino-acid sequence, 37 residues long: Cytochrome b6-f complex subunit 5 (37 aa).

A helical membrane pass occupies residues 5–25 (LLSGIVLGLISITSAGLFVTA).

Belongs to the PetG family. As to quaternary structure, the 4 large subunits of the cytochrome b6-f complex are cytochrome b6, subunit IV (17 kDa polypeptide, PetD), cytochrome f and the Rieske protein, while the 4 small subunits are PetG, PetL, PetM and PetN. The complex functions as a dimer.

The protein resides in the plastid. It localises to the chloroplast thylakoid membrane. Component of the cytochrome b6-f complex, which mediates electron transfer between photosystem II (PSII) and photosystem I (PSI), cyclic electron flow around PSI, and state transitions. PetG is required for either the stability or assembly of the cytochrome b6-f complex. This chain is Cytochrome b6-f complex subunit 5, found in Psilotum nudum (Whisk fern).